The chain runs to 810 residues: Phospholipase D alpha 1 (810 aa).

A propeptide spanning residues 1–36 (MAQHLLHGTLHATIYEVDDLHTGGLRSGFFGKILAN) is cleaved from the precursor. The C2 domain occupies 1–126 (MAQHLLHGTL…IHGEEVDQWV (126 aa)). Asp-187 is a Ca(2+) binding site. One can recognise a PLD phosphodiesterase 1 domain in the interval 327-366 (AMFTHHQKIVVVDSEMPSRGGSQMRRIVSFVGGIDLCDGR). Residues His-332, Lys-334, and Asp-339 contribute to the active site. His-332 contributes to the a 1,2-diacyl-sn-glycero-3-phosphate binding site. Ca(2+) contacts are provided by His-372 and His-406. The a 1,2-diacyl-sn-glycero-3-phosphate site is built by Gln-522 and His-661. The PLD phosphodiesterase 2 domain occupies 656 to 683 (FMIYVHTKMMIVDDEYIIIGSANINQRS). Residues His-661, Lys-663, and Asp-668 contribute to the active site. Glu-722 lines the Ca(2+) pocket.

The protein belongs to the phospholipase D family. C2-PLD subfamily. Requires Ca(2+) as cofactor.

It localises to the cytoplasm. Its subcellular location is the membrane. It carries out the reaction a 1,2-diacyl-sn-glycero-3-phosphocholine + H2O = a 1,2-diacyl-sn-glycero-3-phosphate + choline + H(+). Its function is as follows. Hydrolyzes glycerol-phospholipids at the terminal phosphodiesteric bond. Plays an important role in various cellular processes, including phytohormone action, vesicular trafficking, secretion, cytoskeletal arrangement, meiosis, tumor promotion, pathogenesis, membrane deterioration and senescence. The sequence is that of Phospholipase D alpha 1 (PLD1) from Brassica oleracea var. capitata (Cabbage).